Reading from the N-terminus, the 377-residue chain is DAR GTPase 2, mitochondrial (377 aa).

Residues 1 to 21 (MATAKTWKIAREIGDAVIKAS) constitute a mitochondrion transit peptide. Residues 34–211 (AAAVRAISER…VLDTPGIFPP (178 aa)) enclose the CP-type G domain. The DARXP motif signature appears at 55-59 (DARIP). GTP contacts are provided by residues 82–85 (NKME), 110–111 (NS), 150–155 (NVGKSA), and G207.

This sequence belongs to the TRAFAC class YlqF/YawG GTPase family. MTG1 subfamily.

Its subcellular location is the mitochondrion. GTPase that may function in mitochondrial ribosome assembly. The polypeptide is DAR GTPase 2, mitochondrial (Arabidopsis thaliana (Mouse-ear cress)).